Reading from the N-terminus, the 398-residue chain is uncharacterized protein (398 aa).

Position 212 is an N6-(pyridoxal phosphate)lysine (lysine 212).

The protein belongs to the trans-sulfuration enzymes family. The cofactor is pyridoxal 5'-phosphate.

This is an uncharacterized protein from Schizosaccharomyces pombe (strain 972 / ATCC 24843) (Fission yeast).